A 414-amino-acid polypeptide reads, in one-letter code: Probable serine/threonine-protein kinase PBL26 (414 aa).

C3 carries S-palmitoyl cysteine lipidation. Residues 17–41 (RDSDNSYRRNGEVTGRDNNKTHPEN) are compositionally biased toward basic and acidic residues. The tract at residues 17–55 (RDSDNSYRRNGEVTGRDNNKTHPENPKTVNEQNKNNDED) is disordered. The region spanning 79-356 (FRQECLIGEG…SDVVTALGFL (278 aa)) is the Protein kinase domain. Residues 85–93 (IGEGGFGRV) and K108 contribute to the ATP site. Y153 carries the post-translational modification Phosphotyrosine. The active-site Proton acceptor is D206. S240 is modified (phosphoserine). Residue T246 is modified to Phosphothreonine. Y254 is modified (phosphotyrosine). Positions 364–394 (ISVPHYDDPPQPSDETSVEDSVAAEERERAV) are disordered.

It belongs to the protein kinase superfamily. Ser/Thr protein kinase family. Post-translationally, palmitoylation at Cys-3 and Cys-6 are required for plasma membrane location.

The protein localises to the cell membrane. The enzyme catalyses L-seryl-[protein] + ATP = O-phospho-L-seryl-[protein] + ADP + H(+). It carries out the reaction L-threonyl-[protein] + ATP = O-phospho-L-threonyl-[protein] + ADP + H(+). May be involved in plant defense signaling. The sequence is that of Probable serine/threonine-protein kinase PBL26 from Arabidopsis thaliana (Mouse-ear cress).